Consider the following 78-residue polypeptide: Large ribosomal subunit protein bL31 (78 aa).

This sequence belongs to the bacterial ribosomal protein bL31 family. Type A subfamily. As to quaternary structure, part of the 50S ribosomal subunit.

Its function is as follows. Binds the 23S rRNA. The chain is Large ribosomal subunit protein bL31 from Rickettsia prowazekii (strain Madrid E).